Consider the following 291-residue polypeptide: ATP synthase gamma chain (291 aa).

This sequence belongs to the ATPase gamma chain family. In terms of assembly, F-type ATPases have 2 components, CF(1) - the catalytic core - and CF(0) - the membrane proton channel. CF(1) has five subunits: alpha(3), beta(3), gamma(1), delta(1), epsilon(1). CF(0) has three main subunits: a, b and c.

The protein localises to the cell inner membrane. Functionally, produces ATP from ADP in the presence of a proton gradient across the membrane. The gamma chain is believed to be important in regulating ATPase activity and the flow of protons through the CF(0) complex. This is ATP synthase gamma chain from Neisseria meningitidis serogroup C / serotype 2a (strain ATCC 700532 / DSM 15464 / FAM18).